Reading from the N-terminus, the 345-residue chain is Sorting nexin-15 (345 aa).

Residues 1 to 130 (MSRQAKDDFL…EFFRGGEVTR (130 aa)) enclose the PX domain. At arginine 105 the chain carries Omega-N-methylarginine. Positions 133–163 (EVSGDLHILPPPLIPTPPPDEPRVQPHETWL) are disordered. Residues 141–151 (LPPPLIPTPPP) are compositionally biased toward pro residues. Serine 208 and serine 234 each carry phosphoserine. Residues 226-274 (SKEEGAGPSPTHIGELAALEAGSGRPDQEPWEPGGQAEEDDEEGEPAPA) form a disordered region. Positions 272-345 (APAYLSQATE…AEEILHLHLS (74 aa)) constitute an MIT domain.

This sequence belongs to the sorting nexin family.

Functionally, may be involved in several stages of intracellular trafficking. Overexpression of SNX15 disrupts the normal trafficking of proteins from the plasma membrane to recycling endosomes or the TGN. The protein is Sorting nexin-15 (SNX15) of Bos taurus (Bovine).